We begin with the raw amino-acid sequence, 278 residues long: Small ribosomal subunit protein uS2 (278 aa).

N-acetylserine is present on Ser2. Positions 258 to 278 are disordered; sequence TNEGKTAADEWATGAQTQSNW.

Belongs to the universal ribosomal protein uS2 family. As to quaternary structure, component of the small ribosomal subunit. Mature ribosomes consist of a small (40S) and a large (60S) subunit. The 40S subunit contains about 33 different proteins and 1 molecule of RNA (18S). The 60S subunit contains about 49 different proteins and 3 molecules of RNA (28S, 5.8S and 5S). Interacts with rps-21.

The protein resides in the cytoplasm. Required for the assembly and/or stability of the 40S ribosomal subunit. Required for the processing of the 20S rRNA-precursor to mature 18S rRNA in a late step of the maturation of 40S ribosomal subunits. This is Small ribosomal subunit protein uS2 from Caenorhabditis briggsae.